Reading from the N-terminus, the 100-residue chain is Glutamyl-tRNA(Gln) amidotransferase subunit C (100 aa).

Belongs to the GatC family. Heterotrimer of A, B and C subunits.

The enzyme catalyses L-glutamyl-tRNA(Gln) + L-glutamine + ATP + H2O = L-glutaminyl-tRNA(Gln) + L-glutamate + ADP + phosphate + H(+). The catalysed reaction is L-aspartyl-tRNA(Asn) + L-glutamine + ATP + H2O = L-asparaginyl-tRNA(Asn) + L-glutamate + ADP + phosphate + 2 H(+). Its function is as follows. Allows the formation of correctly charged Asn-tRNA(Asn) or Gln-tRNA(Gln) through the transamidation of misacylated Asp-tRNA(Asn) or Glu-tRNA(Gln) in organisms which lack either or both of asparaginyl-tRNA or glutaminyl-tRNA synthetases. The reaction takes place in the presence of glutamine and ATP through an activated phospho-Asp-tRNA(Asn) or phospho-Glu-tRNA(Gln). The sequence is that of Glutamyl-tRNA(Gln) amidotransferase subunit C from Streptococcus pyogenes serotype M1.